Here is a 193-residue protein sequence, read N- to C-terminus: Probable oligoribonuclease (193 aa).

In terms of domain architecture, Exonuclease spans 15–177 (IIWIDCEMTG…DDIMESIAEL (163 aa)). The active site involves Y136.

Belongs to the oligoribonuclease family.

3'-to-5' exoribonuclease specific for small oligoribonucleotides. This chain is Probable oligoribonuclease, found in Caenorhabditis elegans.